The chain runs to 304 residues: Ferredoxin fas2 (304 aa).

Residues 2–29 (KVVVNERRCFGSGQCVLVAPEVFEQSND) form the 4Fe-4S ferredoxin-type domain. Residues Cys10, Cys16, and Cys54 each contribute to the [3Fe-4S] cluster site. The transketolase-like stretch occupies residues 66–304 (MRQEPTEFSY…QSARSSIQQR (239 aa)).

In the C-terminal section; belongs to the transketolase family. [3Fe-4S] cluster is required as a cofactor.

Its function is as follows. Plays a role in electron transfer. The fas operon encodes genes involved in cytokinin production and in host plant fasciation (leafy gall). The chain is Ferredoxin fas2 (fas2) from Rhodococcoides fascians (Rhodococcus fascians).